A 308-amino-acid chain; its full sequence is PHO85 cyclin-2 (308 aa).

One can recognise a Cyclin N-terminal domain in the interval 18–146 (EMVQYLASTT…LLEYFDWDVT (129 aa)). Residues 248–270 (SPRTYNIDSKHDNKENRPIPTIK) form a disordered region. Positions 255 to 264 (DSKHDNKENR) are enriched in basic and acidic residues.

It belongs to the cyclin family. PCL1,2 subfamily. Forms a cyclin-CDK complex with PHO85. Interacts with RVS167.

Its subcellular location is the cytoplasm. It is found in the nucleus. G1/S-specific cyclin partner of the cyclin-dependent kinase (CDK) PHO85. Essential for the control of the cell cycle at the G1/S (start) transition. Together with cyclin PCL1, positively controls degradation of sphingoid long chain base kinase LCB4. The PCL2-PHO85 cyclin-CDK holoenzyme phosphorylates LCB4, which is required for its ubiquitination and degradation. PCL2-PHO85 also phosphorylates RVS167, linking cyclin-CDK activity with organization of the actin cytoskeleton. This chain is PHO85 cyclin-2 (PCL2), found in Saccharomyces cerevisiae (strain ATCC 204508 / S288c) (Baker's yeast).